The chain runs to 453 residues: tRNA-2-methylthio-N(6)-dimethylallyladenosine synthase (453 aa).

The MTTase N-terminal domain occupies 4–118 (KKFYIENYGC…IPNLINNFFK (115 aa)). The [4Fe-4S] cluster site is built by Cys-13, Cys-49, Cys-83, Cys-156, Cys-160, and Cys-163. One can recognise a Radical SAM core domain in the interval 142-388 (EEKKITAFVT…NLQKTHSYYR (247 aa)). Residues 390 to 453 (RKYIGSIQDI…SATLVGDIYV (64 aa)) form the TRAM domain.

The protein belongs to the methylthiotransferase family. MiaB subfamily. In terms of assembly, monomer. [4Fe-4S] cluster is required as a cofactor.

The protein localises to the cytoplasm. The enzyme catalyses N(6)-dimethylallyladenosine(37) in tRNA + (sulfur carrier)-SH + AH2 + 2 S-adenosyl-L-methionine = 2-methylsulfanyl-N(6)-dimethylallyladenosine(37) in tRNA + (sulfur carrier)-H + 5'-deoxyadenosine + L-methionine + A + S-adenosyl-L-homocysteine + 2 H(+). Functionally, catalyzes the methylthiolation of N6-(dimethylallyl)adenosine (i(6)A), leading to the formation of 2-methylthio-N6-(dimethylallyl)adenosine (ms(2)i(6)A) at position 37 in tRNAs that read codons beginning with uridine. This chain is tRNA-2-methylthio-N(6)-dimethylallyladenosine synthase, found in Karelsulcia muelleri (strain GWSS) (Sulcia muelleri).